The sequence spans 49 residues: IgW transmembrane form Tm2T7/Tm7T7/Tm3T3 (49 aa).

Residue Asn-3 is glycosylated (N-linked (GlcNAc...) asparagine). The chain crosses the membrane as a helical span at residues 25–45 (VAAFAILFILSFLYSTFVTVV).

As to expression, expressed in the spleen. May also be expressed in other lymphoid tissues.

It is found in the membrane. This is IgW transmembrane form Tm2T7/Tm7T7/Tm3T3 from Heterodontus francisci (Horn shark).